The sequence spans 164 residues: Phosphopantetheine adenylyltransferase (164 aa).

T10 is a binding site for substrate. Residues 10-11 and H18 each bind ATP; that span reads TF. The substrate site is built by K42, T79, and R93. ATP-binding positions include 94-96, E104, and 129-135; these read GLR and NQIISSR.

It belongs to the bacterial CoaD family. Homohexamer. It depends on Mg(2+) as a cofactor.

It localises to the cytoplasm. It carries out the reaction (R)-4'-phosphopantetheine + ATP + H(+) = 3'-dephospho-CoA + diphosphate. It functions in the pathway cofactor biosynthesis; coenzyme A biosynthesis; CoA from (R)-pantothenate: step 4/5. Reversibly transfers an adenylyl group from ATP to 4'-phosphopantetheine, yielding dephospho-CoA (dPCoA) and pyrophosphate. The chain is Phosphopantetheine adenylyltransferase from Pelagibacter ubique (strain HTCC1062).